The chain runs to 304 residues: MAQFLELIKNDSNIDFLGKAKLFFIISGVLIVISLFLIFTKGLNLGIDFSGGTVIQLKYEKPADLNKLRQGIGNLKIGDVSIQNFGNPEEVLIRLGKTRDIPLEELSKTIRAKLAEIDPNNKFIVERVEQVGPQVGSELQYKAMMALLYANIGVLIYVAIRFELIFAIGAILALVHDVIITLGFLSLTSKEFNLTVVAALLALIGYSLNDTIVVFDRIRERIKATANEKINIKDIMNKSINETLSRTIITSLLTFFTVLSLMIFGGEVINPFAFTLVIGIIVGTYSSIGIASGLVYLIKSLRKR.

The next 6 helical transmembrane spans lie at 20 to 40 (AKLF…LIFT), 143 to 163 (AMMA…IRFE), 164 to 184 (LIFA…TLGF), 195 to 215 (TVVA…IVVF), 244 to 266 (LSRT…IFGG), and 276 to 298 (LVIG…VYLI).

Belongs to the SecD/SecF family. SecF subfamily. Forms a complex with SecD. Part of the essential Sec protein translocation apparatus which comprises SecA, SecYEG and auxiliary proteins SecDF. Other proteins may also be involved.

It localises to the cell inner membrane. In terms of biological role, part of the Sec protein translocase complex. Interacts with the SecYEG preprotein conducting channel. SecDF uses the proton motive force (PMF) to complete protein translocation after the ATP-dependent function of SecA. This is Protein translocase subunit SecF from Calditerrivibrio nitroreducens (strain DSM 19672 / NBRC 101217 / Yu37-1).